Here is a 66-residue protein sequence, read N- to C-terminus: MSKMKTKSGAKKRFKLTASGKVKAGQAGKRHGMIKRTPKQIRNKRGQVTLSPQDAKIVKKYLPNGL.

Residues 1–15 (MSKMKTKSGAKKRFK) are compositionally biased toward basic residues. Residues 1-35 (MSKMKTKSGAKKRFKLTASGKVKAGQAGKRHGMIK) form a disordered region.

This sequence belongs to the bacterial ribosomal protein bL35 family.

The protein is Large ribosomal subunit protein bL35 of Maricaulis maris (strain MCS10) (Caulobacter maris).